A 185-amino-acid chain; its full sequence is 3-hydroxyanthranilate 3,4-dioxygenase (185 aa).

Residue arginine 44 coordinates O2. 3 residues coordinate Fe cation: histidine 48, glutamate 54, and histidine 95. A substrate-binding site is contributed by glutamate 54. The substrate site is built by arginine 99 and glutamate 109. Cysteine 124, cysteine 127, cysteine 161, and cysteine 164 together coordinate a divalent metal cation.

It belongs to the 3-HAO family. Fe(2+) serves as cofactor.

The protein localises to the cytoplasm. It carries out the reaction 3-hydroxyanthranilate + O2 = (2Z,4Z)-2-amino-3-carboxymuconate 6-semialdehyde. The protein operates within cofactor biosynthesis; NAD(+) biosynthesis; quinolinate from L-kynurenine: step 3/3. Functionally, catalyzes the oxidative ring opening of 3-hydroxyanthranilate to 2-amino-3-carboxymuconate semialdehyde, which spontaneously cyclizes to quinolinate. The protein is 3-hydroxyanthranilate 3,4-dioxygenase of Podospora anserina (strain S / ATCC MYA-4624 / DSM 980 / FGSC 10383) (Pleurage anserina).